Consider the following 197-residue polypeptide: RIP-like protein (197 aa).

The interval 1–20 (MNSTQSPVYRTSVEQKRHAQ) is disordered. The segment at 122–191 (CPVCQIKNLR…GQLYDMCGSC (70 aa)) adopts an RIP-type zinc-finger fold.

This chain is RIP-like protein (Ripalpha), found in Drosophila melanogaster (Fruit fly).